The sequence spans 61 residues: Small ribosomal subunit protein uS14 (61 aa).

Residues Cys24, Cys27, Cys40, and Cys43 each coordinate Zn(2+).

The protein belongs to the universal ribosomal protein uS14 family. Zinc-binding uS14 subfamily. Part of the 30S ribosomal subunit. Contacts proteins S3 and S10. Requires Zn(2+) as cofactor.

Functionally, binds 16S rRNA, required for the assembly of 30S particles and may also be responsible for determining the conformation of the 16S rRNA at the A site. The polypeptide is Small ribosomal subunit protein uS14 (Syntrophotalea carbinolica (strain DSM 2380 / NBRC 103641 / GraBd1) (Pelobacter carbinolicus)).